We begin with the raw amino-acid sequence, 401 residues long: Dihydrolipoyllysine-residue succinyltransferase component of 2-oxoglutarate dehydrogenase complex (401 aa).

Residues 2-77 enclose the Lipoyl-binding domain; the sequence is SVKIIVPSLG…AVGEEIGEIN (76 aa). Residue lysine 43 is modified to N6-lipoyllysine. The 38-residue stretch at 115-152 folds into the Peripheral subunit-binding (PSBD) domain; sequence ILAPSVQKLVTENKLDPNNIKGTGRDGRITKGDVLETI. Active-site residues include histidine 372 and aspartate 376.

The protein belongs to the 2-oxoacid dehydrogenase family. In terms of assembly, forms a 24-polypeptide structural core with octahedral symmetry. Part of the 2-oxoglutarate dehydrogenase (OGDH) complex composed of E1 (2-oxoglutarate dehydrogenase), E2 (dihydrolipoamide succinyltransferase) and E3 (dihydrolipoamide dehydrogenase); the complex contains multiple copies of the three enzymatic components (E1, E2 and E3). (R)-lipoate serves as cofactor.

It catalyses the reaction N(6)-[(R)-dihydrolipoyl]-L-lysyl-[protein] + succinyl-CoA = N(6)-[(R)-S(8)-succinyldihydrolipoyl]-L-lysyl-[protein] + CoA. Its pathway is amino-acid degradation; L-lysine degradation via saccharopine pathway; glutaryl-CoA from L-lysine: step 6/6. In terms of biological role, E2 component of the 2-oxoglutarate dehydrogenase (OGDH) complex which catalyzes the second step in the conversion of 2-oxoglutarate to succinyl-CoA and CO(2). In Rickettsia felis (strain ATCC VR-1525 / URRWXCal2) (Rickettsia azadi), this protein is Dihydrolipoyllysine-residue succinyltransferase component of 2-oxoglutarate dehydrogenase complex (sucB).